Consider the following 398-residue polypeptide: tRNA-specific 2-thiouridylase MnmA (398 aa).

ATP contacts are provided by residues 20-27 (AMSGGVDS) and Leu-46. The active-site Nucleophile is the Cys-114. A disulfide bridge connects residues Cys-114 and Cys-210. ATP is bound at residue Gly-138. The interaction with tRNA stretch occupies residues 160–162 (RDQ). Cys-210 serves as the catalytic Cysteine persulfide intermediate.

It belongs to the MnmA/TRMU family.

It is found in the cytoplasm. The catalysed reaction is S-sulfanyl-L-cysteinyl-[protein] + uridine(34) in tRNA + AH2 + ATP = 2-thiouridine(34) in tRNA + L-cysteinyl-[protein] + A + AMP + diphosphate + H(+). Functionally, catalyzes the 2-thiolation of uridine at the wobble position (U34) of tRNA, leading to the formation of s(2)U34. This chain is tRNA-specific 2-thiouridylase MnmA, found in Brucella melitensis biotype 1 (strain ATCC 23456 / CCUG 17765 / NCTC 10094 / 16M).